We begin with the raw amino-acid sequence, 386 residues long: Vesicle-associated protein 2-2 (386 aa).

At methionine 1 the chain carries N-acetylmethionine. The Cytoplasmic portion of the chain corresponds to methionine 1–asparagine 363. Residues leucine 5–valine 125 form the MSP domain. At serine 279 the chain carries Phosphoserine. Residues glutamate 300–arginine 353 are a coiled coil. A helical; Anchor for type IV membrane protein membrane pass occupies residues glycine 364–leucine 384.

This sequence belongs to the VAMP-associated protein (VAP) (TC 9.B.17) family. In terms of assembly, interacts with cowpea mosaic virus (CPMV) NTP-binding protein (NTB).

The protein resides in the endoplasmic reticulum membrane. Functionally, may play a role in vesicle trafficking. This Arabidopsis thaliana (Mouse-ear cress) protein is Vesicle-associated protein 2-2 (PVA22).